Reading from the N-terminus, the 27-residue chain is Secretin (27 aa).

M27 carries the post-translational modification Methionine amide.

Belongs to the glucagon family.

It is found in the secreted. Its function is as follows. Hormone involved in different processes, such as regulation of the pH of the duodenal content, food intake and water homeostasis. Exerts its biological effects by binding to secretin receptor (SCTR), a G-protein coupled receptor expressed in the basolateral domain of several cells. The polypeptide is Secretin (Gallus gallus (Chicken)).